The chain runs to 842 residues: Leucine--tRNA ligase (842 aa).

The 'HIGH' region motif lies at 44–55; sequence PYPSANGLHVGH. The 'KMSKS' region motif lies at 619-623; sequence KMSKS. Lys-622 is an ATP binding site.

The protein belongs to the class-I aminoacyl-tRNA synthetase family.

The protein resides in the cytoplasm. It carries out the reaction tRNA(Leu) + L-leucine + ATP = L-leucyl-tRNA(Leu) + AMP + diphosphate. This is Leucine--tRNA ligase from Borrelia hermsii (strain HS1 / DAH).